Here is a 184-residue protein sequence, read N- to C-terminus: ATP synthase subunit b, chloroplastic (184 aa).

The chain crosses the membrane as a helical span at residues 31–53 (LINLGIVISLLIYFGKGVLSNLL).

This sequence belongs to the ATPase B chain family. F-type ATPases have 2 components, F(1) - the catalytic core - and F(0) - the membrane proton channel. F(1) has five subunits: alpha(3), beta(3), gamma(1), delta(1), epsilon(1). F(0) has four main subunits: a(1), b(1), b'(1) and c(10-14). The alpha and beta chains form an alternating ring which encloses part of the gamma chain. F(1) is attached to F(0) by a central stalk formed by the gamma and epsilon chains, while a peripheral stalk is formed by the delta, b and b' chains.

The protein localises to the plastid. Its subcellular location is the chloroplast thylakoid membrane. Its function is as follows. F(1)F(0) ATP synthase produces ATP from ADP in the presence of a proton or sodium gradient. F-type ATPases consist of two structural domains, F(1) containing the extramembraneous catalytic core and F(0) containing the membrane proton channel, linked together by a central stalk and a peripheral stalk. During catalysis, ATP synthesis in the catalytic domain of F(1) is coupled via a rotary mechanism of the central stalk subunits to proton translocation. In terms of biological role, component of the F(0) channel, it forms part of the peripheral stalk, linking F(1) to F(0). The chain is ATP synthase subunit b, chloroplastic from Aneura mirabilis (Parasitic liverwort).